The primary structure comprises 424 residues: UPF0229 protein Sde_0732 (424 aa).

A disordered region spans residues 52-109 (IGIPSKDISEPVFHHDSGGVDTRVLPGNDQFHSGDRIQRPPSGQGGGGSGKGASDSGE). The span at 58–69 (DISEPVFHHDSG) shows a compositional bias: basic and acidic residues.

The protein belongs to the UPF0229 family.

This chain is UPF0229 protein Sde_0732, found in Saccharophagus degradans (strain 2-40 / ATCC 43961 / DSM 17024).